A 1812-amino-acid polypeptide reads, in one-letter code: Sperm flagellar protein 2 (1812 aa).

Residues 1–105 (MSEILCHWLN…LLYQLYIALQ (105 aa)) form the Calponin-homology (CH) domain. Coiled-coil stretches lie at residues 178–260 (LENF…KDLQ) and 374–403 (EERR…EEQA). Over residues 618–630 (EEKASPVRQESGD) the composition is skewed to basic and acidic residues. Residues 618 to 658 (EEKASPVRQESGDRSQNLHNVLSAEGTPETEDETRLSTKKT) form a disordered region. Coiled coils occupy residues 724 to 750 (LNQA…KKSQ), 803 to 827 (ENIN…DQIQ), and 868 to 897 (KEMF…KEEF). Residues 879–897 (ENKAKKKSEEKEAEKKEEF) show a composition bias toward basic and acidic residues. Disordered regions lie at residues 879-1002 (ENKA…KPGS), 1272-1322 (EEKE…APVI), and 1793-1812 (EHIQ…EEKK). The segment covering 902 to 913 (ATPPTPPAPPPS) has biased composition (pro residues). 3 stretches are compositionally biased toward basic and acidic residues: residues 914 to 929 (EPEK…ERSK), 943 to 961 (HGNR…ETSP), and 1272 to 1285 (EEKE…KEKP). Positions 1292-1310 (KKVKKEPPKKKREDKKGKG) are enriched in basic residues. Residues 1317-1669 (ESAPVITVEE…AEKTSSFIDM (353 aa)) are interaction with IFT20.

Interacts (via C-terminus) with IFT20. Interacts with DYNC1I2. Predominantly expressed in ciliated tissues. Mainly expressed in testis, followed by trachea. Also expressed at lower level in lung, kidney and liver.

It is found in the cell projection. The protein localises to the cilium. It localises to the flagellum. Its subcellular location is the cytoplasm. The protein resides in the golgi apparatus. Functionally, required for correct axoneme development in spermatozoa. Important for normal development of the manchette and sperm head morphology. Essential for male fertility. Plays a role in localization of the intraflagellar transport protein IFT20 to the manchette, suggesting function as an adapter for dynein-mediated protein transport during spermatogenesis. Also plays a role in bone growth where it seems to be required for normal osteoblast differentiation. The sequence is that of Sperm flagellar protein 2 (SPEF2) from Sus scrofa (Pig).